The primary structure comprises 357 residues: DNA polymerase IV 2 (357 aa).

Residues 4–184 enclose the UmuC domain; it reads IIHVDMDAFY…LAVKKFHGVG (181 aa). 2 residues coordinate Mg(2+): Asp-8 and Asp-102. Glu-103 is a catalytic residue.

Belongs to the DNA polymerase type-Y family. In terms of assembly, monomer. Mg(2+) is required as a cofactor.

Its subcellular location is the cytoplasm. The enzyme catalyses DNA(n) + a 2'-deoxyribonucleoside 5'-triphosphate = DNA(n+1) + diphosphate. Poorly processive, error-prone DNA polymerase involved in untargeted mutagenesis. Copies undamaged DNA at stalled replication forks, which arise in vivo from mismatched or misaligned primer ends. These misaligned primers can be extended by PolIV. Exhibits no 3'-5' exonuclease (proofreading) activity. May be involved in translesional synthesis, in conjunction with the beta clamp from PolIII. The chain is DNA polymerase IV 2 (dinB2) from Agrobacterium fabrum (strain C58 / ATCC 33970) (Agrobacterium tumefaciens (strain C58)).